We begin with the raw amino-acid sequence, 349 residues long: Probable protease SohB (349 aa).

The Periplasmic segment spans residues Met1 to Gly8. A helical transmembrane segment spans residues Leu9 to Val29. The Cytoplasmic portion of the chain corresponds to Asn30–Met349. The active-site Nucleophile is Ser178. Lys230 serves as the catalytic Proton donor/acceptor.

This sequence belongs to the peptidase S49 family.

The protein localises to the cell inner membrane. Multicopy suppressor of the HtrA (DegP) null phenotype. It is possibly a protease, not essential for bacterial viability. The chain is Probable protease SohB (sohB) from Escherichia coli (strain K12).